Reading from the N-terminus, the 96-residue chain is Co-chaperonin GroES (96 aa).

Belongs to the GroES chaperonin family. Heptamer of 7 subunits arranged in a ring. Interacts with the chaperonin GroEL.

The protein resides in the cytoplasm. In terms of biological role, together with the chaperonin GroEL, plays an essential role in assisting protein folding. The GroEL-GroES system forms a nano-cage that allows encapsulation of the non-native substrate proteins and provides a physical environment optimized to promote and accelerate protein folding. GroES binds to the apical surface of the GroEL ring, thereby capping the opening of the GroEL channel. This Ralstonia nicotianae (strain ATCC BAA-1114 / GMI1000) (Ralstonia solanacearum) protein is Co-chaperonin GroES.